The chain runs to 270 residues: tRNA pseudouridine synthase A (270 aa).

D51 acts as the Nucleophile in catalysis. Y109 is a binding site for substrate.

Belongs to the tRNA pseudouridine synthase TruA family. Homodimer.

The enzyme catalyses uridine(38/39/40) in tRNA = pseudouridine(38/39/40) in tRNA. Functionally, formation of pseudouridine at positions 38, 39 and 40 in the anticodon stem and loop of transfer RNAs. This chain is tRNA pseudouridine synthase A, found in Burkholderia multivorans (strain ATCC 17616 / 249).